The sequence spans 245 residues: Uridylate kinase (245 aa).

12–15 (KLSG) is a binding site for ATP. Positions 20-25 (GEKGVG) are involved in allosteric activation by GTP. A UMP-binding site is contributed by glycine 54. Positions 55 and 59 each coordinate ATP. UMP-binding positions include aspartate 74 and 135-142 (IGSPYFST). The ATP site is built by asparagine 163, tyrosine 169, and aspartate 172.

It belongs to the UMP kinase family. Homohexamer.

It is found in the cytoplasm. The enzyme catalyses UMP + ATP = UDP + ADP. The protein operates within pyrimidine metabolism; CTP biosynthesis via de novo pathway; UDP from UMP (UMPK route): step 1/1. Allosterically activated by GTP. Inhibited by UTP. Catalyzes the reversible phosphorylation of UMP to UDP. The protein is Uridylate kinase of Streptococcus thermophilus (strain ATCC BAA-491 / LMD-9).